The primary structure comprises 291 residues: MVRRFLKMHGLGNDFVVLDARRDPLPLTTAAARAIADRHTGVGCDQIVLLEPPRHPAADLFMRILNPDGSESGACGNATRCVASLVADGSGRAEVTVETATGLLRCRLRADGSVTVDMGPARLDWTQIPLAAAHDTLRVPAGAGPLQDACCVGMGNPHAVFFVDDAEAVDLATLGPVLEHHSLFPQRCNIEVAQVLAPDHIRMRVWERGAGITRACGSGSCATLVAAARRGLTGRAAWIELDGGRLWIEWHGDGHVLMTGPVATAFTGELSETLLPGSLPSETPLPETVPA.

Substrate-binding residues include Asn13, Gln46, and Asn66. Catalysis depends on Cys75, which acts as the Proton donor. Residues Gly76–Asn77, Asn156, Asn189, and Glu207–Arg208 each bind substrate. Cys216 acts as the Proton acceptor in catalysis. Residue Gly217 to Ser218 participates in substrate binding.

The protein belongs to the diaminopimelate epimerase family. Homodimer.

It localises to the cytoplasm. It catalyses the reaction (2S,6S)-2,6-diaminopimelate = meso-2,6-diaminopimelate. It participates in amino-acid biosynthesis; L-lysine biosynthesis via DAP pathway; DL-2,6-diaminopimelate from LL-2,6-diaminopimelate: step 1/1. Functionally, catalyzes the stereoinversion of LL-2,6-diaminopimelate (L,L-DAP) to meso-diaminopimelate (meso-DAP), a precursor of L-lysine and an essential component of the bacterial peptidoglycan. The sequence is that of Diaminopimelate epimerase from Rhodospirillum centenum (strain ATCC 51521 / SW).